The chain runs to 962 residues: Glycine dehydrogenase (decarboxylating) (962 aa).

K709 is subject to N6-(pyridoxal phosphate)lysine.

This sequence belongs to the GcvP family. In terms of assembly, the glycine cleavage system is composed of four proteins: P, T, L and H. Pyridoxal 5'-phosphate is required as a cofactor.

The enzyme catalyses N(6)-[(R)-lipoyl]-L-lysyl-[glycine-cleavage complex H protein] + glycine + H(+) = N(6)-[(R)-S(8)-aminomethyldihydrolipoyl]-L-lysyl-[glycine-cleavage complex H protein] + CO2. Its function is as follows. The glycine cleavage system catalyzes the degradation of glycine. The P protein binds the alpha-amino group of glycine through its pyridoxal phosphate cofactor; CO(2) is released and the remaining methylamine moiety is then transferred to the lipoamide cofactor of the H protein. This Shewanella amazonensis (strain ATCC BAA-1098 / SB2B) protein is Glycine dehydrogenase (decarboxylating).